Consider the following 379-residue polypeptide: Epoxyqueuosine reductase (379 aa).

Asp139 acts as the Proton donor in catalysis. Residues Ile181–Thr213 form the 4Fe-4S ferredoxin-type domain. Residues Cys193, Cys196, Cys199, Cys203, Cys219, Cys246, Cys249, and Cys253 each coordinate [4Fe-4S] cluster.

It belongs to the QueG family. As to quaternary structure, monomer. It depends on cob(II)alamin as a cofactor. [4Fe-4S] cluster is required as a cofactor.

It localises to the cytoplasm. The enzyme catalyses epoxyqueuosine(34) in tRNA + AH2 = queuosine(34) in tRNA + A + H2O. It functions in the pathway tRNA modification; tRNA-queuosine biosynthesis. Functionally, catalyzes the conversion of epoxyqueuosine (oQ) to queuosine (Q), which is a hypermodified base found in the wobble positions of tRNA(Asp), tRNA(Asn), tRNA(His) and tRNA(Tyr). In Escherichia coli (strain K12), this protein is Epoxyqueuosine reductase.